A 207-amino-acid chain; its full sequence is Small ribosomal subunit protein uS4c (207 aa).

Residues 92–155 form the S4 RNA-binding domain; it reads MRLDNILFRL…TYQSILSKRI (64 aa).

This sequence belongs to the universal ribosomal protein uS4 family. Part of the 30S ribosomal subunit. Contacts protein S5. The interaction surface between S4 and S5 is involved in control of translational fidelity.

The protein localises to the plastid. It localises to the chloroplast. Its function is as follows. One of the primary rRNA binding proteins, it binds directly to 16S rRNA where it nucleates assembly of the body of the 30S subunit. With S5 and S12 plays an important role in translational accuracy. This is Small ribosomal subunit protein uS4c (rps4) from Equisetum scirpoides (Dwarf-scouring rush).